A 1129-amino-acid polypeptide reads, in one-letter code: Phytochrome A type 3 (1129 aa).

Residues 1-21 show a composition bias toward low complexity; sequence MSSSRPASSSSSRNRQSSQAR. Residues 1–24 are disordered; that stretch reads MSSSRPASSSSSRNRQSSQARVLA. Residues 217–402 enclose the GAF domain; it reads SMEVLCNTVV…VFAVHVNREF (186 aa). Residue cysteine 322 participates in phytochromobilin binding. 2 PAS domains span residues 618–688 and 748–822; these read VTSE…LQGK and VEGD…VSLC. Residues 902–1122 form the Histidine kinase domain; sequence YMRHAINNPL…TFIITAELAS (221 aa).

Belongs to the phytochrome family. Homodimer. Contains one covalently linked phytochromobilin chromophore.

Functionally, regulatory photoreceptor which exists in two forms that are reversibly interconvertible by light: the Pr form that absorbs maximally in the red region of the spectrum and the Pfr form that absorbs maximally in the far-red region. Photoconversion of Pr to Pfr induces an array of morphogenic responses, whereas reconversion of Pfr to Pr cancels the induction of those responses. Pfr controls the expression of a number of nuclear genes including those encoding the small subunit of ribulose-bisphosphate carboxylase, chlorophyll A/B binding protein, protochlorophyllide reductase, rRNA, etc. It also controls the expression of its own gene(s) in a negative feedback fashion. The polypeptide is Phytochrome A type 3 (PHYA3) (Avena sativa (Oat)).